The chain runs to 622 residues: Dopamine beta-hydroxylase (622 aa).

Residues 1–20 are Cytoplasmic-facing; that stretch reads MQAHLSHQPCWSSLPSPSVR. The helical; Signal-anchor for type II membrane protein transmembrane segment at 21 to 41 threads the bilayer; it reads EAASMYGTAVAIFLVILVAAL. At 42–621 the chain is on the intragranular side; sequence RGSEPPESPF…TVPITTEADA (580 aa). The region spanning 61–177 is the DOMON domain; that stretch reads GILELSWNVS…DTVHLVYGIL (117 aa). 2 N-linked (GlcNAc...) asparagine glycosylation sites follow: asparagine 68 and asparagine 188. 6 disulfide bridges follow: cysteine 158–cysteine 600, cysteine 236–cysteine 287, cysteine 273–cysteine 299, cysteine 394–cysteine 507, cysteine 398–cysteine 569, and cysteine 470–cysteine 492. Residue tyrosine 234 is part of the active site. Cu(2+) is bound by residues histidine 266 and histidine 267. Histidine 337 serves as a coordination point for Cu(2+). Serine 350 is modified (phosphoserine; by CaMK). Histidine 416 is an active-site residue. The Cu(2+) site is built by histidine 416 and histidine 418. N-linked (GlcNAc...) asparagine glycosylation is present at asparagine 476. Methionine 491 is a binding site for Cu(2+). N-linked (GlcNAc...) asparagine glycosylation is present at asparagine 570. The disordered stretch occupies residues 594 to 622; sequence EEPTPRCPIRQTQSPANPTVPITTEADAE. Residues 603–615 are compositionally biased toward polar residues; the sequence is RQTQSPANPTVPI.

This sequence belongs to the copper type II ascorbate-dependent monooxygenase family. In terms of assembly, homotetramer; composed of two disulfide-linked dimers. Requires Cu(2+) as cofactor. In terms of processing, proteolytic cleavage after the membrane-anchor leads to the release of the soluble form. Post-translationally, N-glycosylated. Detected in adrenal gland secretory granules (at protein level). Detected in adrenal gland.

It localises to the cytoplasmic vesicle. Its subcellular location is the secretory vesicle lumen. The protein localises to the secretory vesicle. It is found in the chromaffin granule lumen. The protein resides in the secretory vesicle membrane. It localises to the chromaffin granule membrane. The catalysed reaction is dopamine + 2 L-ascorbate + O2 = (R)-noradrenaline + 2 monodehydro-L-ascorbate radical + H2O. It participates in catecholamine biosynthesis; (R)-noradrenaline biosynthesis; (R)-noradrenaline from dopamine: step 1/1. In terms of biological role, catalyzes the hydroxylation of dopamine to noradrenaline (also known as norepinephrine), and is thus vital for regulation of these neurotransmitters. The sequence is that of Dopamine beta-hydroxylase (Dbh) from Mus musculus (Mouse).